Consider the following 362-residue polypeptide: Innexin-17 (362 aa).

4 helical membrane passes run 27 to 47 (YFTVFLLTSSAFFIMAKQYVG), 101 to 121 (WVPFILFGLAVVIYIPRVIWN), 189 to 209 (FLATILIFISMGFLDYFMGLG), and 266 to 286 (LFIALWWWYALLAILSIFDIF).

It belongs to the pannexin family.

The protein localises to the cell membrane. The protein resides in the cell junction. Its subcellular location is the gap junction. Structural component of the gap junctions. The polypeptide is Innexin-17 (Caenorhabditis elegans).